The following is a 310-amino-acid chain: tRNA-cytidine(32) 2-sulfurtransferase (310 aa).

The PP-loop motif motif lies at 45–50; it reads SGGKDS. Residues cysteine 120, cysteine 123, and cysteine 211 each contribute to the [4Fe-4S] cluster site.

Belongs to the TtcA family. Homodimer. It depends on Mg(2+) as a cofactor. The cofactor is [4Fe-4S] cluster.

The protein resides in the cytoplasm. It catalyses the reaction cytidine(32) in tRNA + S-sulfanyl-L-cysteinyl-[cysteine desulfurase] + AH2 + ATP = 2-thiocytidine(32) in tRNA + L-cysteinyl-[cysteine desulfurase] + A + AMP + diphosphate + H(+). The protein operates within tRNA modification. Catalyzes the ATP-dependent 2-thiolation of cytidine in position 32 of tRNA, to form 2-thiocytidine (s(2)C32). The sulfur atoms are provided by the cysteine/cysteine desulfurase (IscS) system. The sequence is that of tRNA-cytidine(32) 2-sulfurtransferase from Shewanella baltica (strain OS155 / ATCC BAA-1091).